We begin with the raw amino-acid sequence, 295 residues long: Protease HtpX homolog (295 aa).

The next 2 helical transmembrane spans lie at 6–26 (IGLFLLTNILVVVTISIVTSV) and 40–60 (LSSLLVFCFLWGMGGAFVSLL). A Zn(2+)-binding site is contributed by His148. Glu149 is a catalytic residue. Zn(2+) is bound at residue His152. 2 consecutive transmembrane segments (helical) span residues 163–183 (LIQGVVNAFVMFFSRIISYAL) and 198–218 (IANIVLSILFSILGSIIVAYF). Residue Glu223 participates in Zn(2+) binding.

This sequence belongs to the peptidase M48B family. It depends on Zn(2+) as a cofactor.

It localises to the cell inner membrane. The chain is Protease HtpX homolog from Leptospira interrogans serogroup Icterohaemorrhagiae serovar copenhageni (strain Fiocruz L1-130).